A 1043-amino-acid polypeptide reads, in one-letter code: V(D)J recombination-activating protein 1 (1043 aa).

The interaction with importin alpha-1 stretch occupies residues 1–288; sequence MAASFPPTLG…LAVDFPEHFV (288 aa). Residues 40–54 show a composition bias toward basic and acidic residues; that stretch reads KTPEEAQKEKKDSFE. A disordered region spans residues 40–80; that stretch reads KTPEEAQKEKKDSFEGKPSLEQSPAVLDKADGQKPVPTQPL. Lys-234 participates in a covalent cross-link: Glycyl lysine isopeptide (Lys-Gly) (interchain with G-Cter in ubiquitin). 15 residues coordinate Zn(2+): Cys-269, His-273, Cys-293, Cys-296, His-298, Cys-308, His-310, Cys-313, Cys-316, Cys-328, Cys-331, Cys-358, Cys-363, His-375, and His-379. An RING-type zinc finger spans residues 293–332; that stretch reads CQICEHILADPVETNCKHVFCRVCILRCLKVMGSYCPSCR. Residues 354–383 form an RAG1-type zinc finger; sequence LMVKCPAKECNEEVSLEKYNHHISSHKESK. Positions 392–459 form a DNA-binding region, NBD; it reads GGRPRQHLLS…QADELEAIMQ (68 aa). Asp-603, Asp-711, and Glu-965 together coordinate a divalent metal cation.

The protein belongs to the RAG1 family. As to quaternary structure, homodimer. Component of the RAG complex composed of core components RAG1 and RAG2, and associated component HMGB1 or HMGB2. Interacts with DCAF1, leading to recruitment of the CUL4A-RBX1-DDB1-DCAF1/VPRBP complex to ubiquitinate proteins and limit error-prone repair during V(D)J recombination. It depends on Mg(2+) as a cofactor. The cofactor is Mn(2+). Autoubiquitinated in the presence of CDC34/UBCH3. As to expression, maturing lymphoid cells.

It is found in the nucleus. It carries out the reaction S-ubiquitinyl-[E2 ubiquitin-conjugating enzyme]-L-cysteine + [acceptor protein]-L-lysine = [E2 ubiquitin-conjugating enzyme]-L-cysteine + N(6)-ubiquitinyl-[acceptor protein]-L-lysine.. Functionally, catalytic component of the RAG complex, a multiprotein complex that mediates the DNA cleavage phase during V(D)J recombination. V(D)J recombination assembles a diverse repertoire of immunoglobulin and T-cell receptor genes in developing B and T-lymphocytes through rearrangement of different V (variable), in some cases D (diversity), and J (joining) gene segments. In the RAG complex, RAG1 mediates the DNA-binding to the conserved recombination signal sequences (RSS) and catalyzes the DNA cleavage activities by introducing a double-strand break between the RSS and the adjacent coding segment. RAG2 is not a catalytic component but is required for all known catalytic activities. DNA cleavage occurs in 2 steps: a first nick is introduced in the top strand immediately upstream of the heptamer, generating a 3'-hydroxyl group that can attack the phosphodiester bond on the opposite strand in a direct transesterification reaction, thereby creating 4 DNA ends: 2 hairpin coding ends and 2 blunt, 5'-phosphorylated ends. The chromatin structure plays an essential role in the V(D)J recombination reactions and the presence of histone H3 trimethylated at 'Lys-4' (H3K4me3) stimulates both the nicking and haipinning steps. The RAG complex also plays a role in pre-B cell allelic exclusion, a process leading to expression of a single immunoglobulin heavy chain allele to enforce clonality and monospecific recognition by the B-cell antigen receptor (BCR) expressed on individual B-lymphocytes. The introduction of DNA breaks by the RAG complex on one immunoglobulin allele induces ATM-dependent repositioning of the other allele to pericentromeric heterochromatin, preventing accessibility to the RAG complex and recombination of the second allele. In addition to its endonuclease activity, RAG1 also acts as an E3 ubiquitin-protein ligase that mediates monoubiquitination of histone H3. Histone H3 monoubiquitination is required for the joining step of V(D)J recombination. Mediates polyubiquitination of KPNA1. This is V(D)J recombination-activating protein 1 (RAG1) from Homo sapiens (Human).